We begin with the raw amino-acid sequence, 249 residues long: Triosephosphate isomerase (249 aa).

9-11 (NWK) provides a ligand contact to substrate. His94 acts as the Electrophile in catalysis. Glu166 (proton acceptor) is an active-site residue. Substrate contacts are provided by residues Gly172, Ser211, and 232–233 (GG).

The protein belongs to the triosephosphate isomerase family. In terms of assembly, homodimer.

The protein localises to the cytoplasm. It catalyses the reaction D-glyceraldehyde 3-phosphate = dihydroxyacetone phosphate. The protein operates within carbohydrate biosynthesis; gluconeogenesis. Its pathway is carbohydrate degradation; glycolysis; D-glyceraldehyde 3-phosphate from glycerone phosphate: step 1/1. In terms of biological role, involved in the gluconeogenesis. Catalyzes stereospecifically the conversion of dihydroxyacetone phosphate (DHAP) to D-glyceraldehyde-3-phosphate (G3P). The sequence is that of Triosephosphate isomerase from Chromohalobacter salexigens (strain ATCC BAA-138 / DSM 3043 / CIP 106854 / NCIMB 13768 / 1H11).